Reading from the N-terminus, the 81-residue chain is uncharacterized protein (81 aa).

This is an uncharacterized protein from Bacillus subtilis (strain 168).